The following is a 447-amino-acid chain: N-succinylarginine dihydrolase (447 aa).

Residues A19–S28, N110, and H137–R138 each bind substrate. Residue E174 is part of the active site. Position 213 (R213) interacts with substrate. H249 is an active-site residue. 2 residues coordinate substrate: D251 and N364. The active-site Nucleophile is C370.

This sequence belongs to the succinylarginine dihydrolase family. As to quaternary structure, homodimer.

The catalysed reaction is N(2)-succinyl-L-arginine + 2 H2O + 2 H(+) = N(2)-succinyl-L-ornithine + 2 NH4(+) + CO2. It functions in the pathway amino-acid degradation; L-arginine degradation via AST pathway; L-glutamate and succinate from L-arginine: step 2/5. Its function is as follows. Catalyzes the hydrolysis of N(2)-succinylarginine into N(2)-succinylornithine, ammonia and CO(2). The polypeptide is N-succinylarginine dihydrolase (Yersinia pestis bv. Antiqua (strain Antiqua)).